The primary structure comprises 760 residues: Protein P1 (760 aa).

Positions 1–33 (MASFLKPVNSQGLWLSLLLAITYLFLLPSAGQS) are cleaved as a signal peptide. A run of 4 helical transmembrane segments spans residues 172–192 (LIEF…VYVA), 194–214 (AVPG…WAWP), 218–235 (ASSL…IGFL), and 240–260 (IGLI…WSLL). The 198-residue stretch at 318–515 (IPGVQIKKLR…SSSPKFTGCE (198 aa)) folds into the Peptidase S39 domain. Catalysis depends on for protease activity residues His366, Asp396, and Ser465. Disordered stretches follow at residues 572–672 (GLWA…LSQV) and 684–760 (LTVQ…PRRN). A compositionally biased stretch (basic and acidic residues) spans 621–643 (RAEKVRHVRRSEMTPEQKRADNL).

The protein belongs to the peptidase S39B family. Specific enzymatic cleavages in vivo yield mature proteins. The protease probably cleaves itself and releases the VPg protein.

Its subcellular location is the membrane. Its function is as follows. Precursor from which the VPg molecule is probably released at the onset of the RNA synthesis. Essential for virus replication. This Pea enation mosaic virus-1 (strain WSG) (PEMV-1) protein is Protein P1.